Here is a 132-residue protein sequence, read N- to C-terminus: D-ribose pyranase (132 aa).

The active-site Proton donor is H20. Substrate is bound by residues D28, H98, and 120 to 122 (YAN).

It belongs to the RbsD / FucU family. RbsD subfamily. In terms of assembly, homodecamer.

It localises to the cytoplasm. The catalysed reaction is beta-D-ribopyranose = beta-D-ribofuranose. It participates in carbohydrate metabolism; D-ribose degradation; D-ribose 5-phosphate from beta-D-ribopyranose: step 1/2. Catalyzes the interconversion of beta-pyran and beta-furan forms of D-ribose. This chain is D-ribose pyranase, found in Geobacillus thermodenitrificans (strain NG80-2).